We begin with the raw amino-acid sequence, 140 residues long: ATP synthase epsilon chain (140 aa).

The protein belongs to the ATPase epsilon chain family. As to quaternary structure, F-type ATPases have 2 components, CF(1) - the catalytic core - and CF(0) - the membrane proton channel. CF(1) has five subunits: alpha(3), beta(3), gamma(1), delta(1), epsilon(1). CF(0) has three main subunits: a, b and c.

It localises to the cell inner membrane. Functionally, produces ATP from ADP in the presence of a proton gradient across the membrane. This is ATP synthase epsilon chain from Xanthomonas campestris pv. campestris (strain 8004).